A 308-amino-acid chain; its full sequence is ABC transporter protein AbcA (308 aa).

The 240-residue stretch at 6 to 245 (LAVSGVNKSF…YHKLLHMEGD (240 aa)) folds into the ABC transporter domain. Residue 58 to 65 (GHNGAGKS) participates in ATP binding.

The protein belongs to the ABC transporter superfamily.

Its function is as follows. Influences the expression of the surface array protein gene (vapA). May have both regulatory and transport activities. In Aeromonas salmonicida, this protein is ABC transporter protein AbcA (abcA).